A 629-amino-acid polypeptide reads, in one-letter code: MKSNYDVIVVGGGHAGVEAALASARLNKKTALINLYEDKIATMPCNPSVGGPAKGIVVREIDALGGEMAKAADATALQTKLLNSSRGPGVWALRVQSDKEEYSKYMRNVIKKQKNLDLITKACTGLVYDDNKSVTGIYLDDEIILNAKAVIITTGTYLKSEILKGIDRYESGPNNEKTTKGISKSLIDLGIKLMRFKTGTPARVYRDSVDLSRAIIEPGTDMKLAFSFSTNTYTPIEKQQPCYLIHSTLETKKIIEDNLEKSAMYSGTVESIGPRYCPSFEDKVVRFKEKDTHQIFIEPETLNGDTWYVQGFSTSMPIEVQELMLKSLPGFENVRVKHWAYAIEYDCIDPMQLSPSLELKDVRNLFTAGQINGTSGYEEAAGQGLIAGINASRKIDGLDPIILRRDEAYIGVMIDDLINKGVWEPYRLLTSRAEHRLLLRNDNAETRLKQYGREIGLISDTEWEQYLIYVKEIEQAIKELKEIRFTPKSQLAINLKNKKQADLSHGYSGYEIIKIPTVDINELIEFIPSLQKLKTNQLQSIVIEIRFEGYVKKERQLVDKLVKLERKKIPLDINYSKVDNLATEAKDKLEKIRPLNIGQASRITGVNPADIQMLLFYLKKQYPLESIDD.

FAD is bound at residue 11 to 16 (GGGHAG). Position 273–287 (273–287 (GPRYCPSFEDKVVRF)) interacts with NAD(+).

The protein belongs to the MnmG family. In terms of assembly, homodimer. Heterotetramer of two MnmE and two MnmG subunits. It depends on FAD as a cofactor.

It localises to the cytoplasm. NAD-binding protein involved in the addition of a carboxymethylaminomethyl (cmnm) group at the wobble position (U34) of certain tRNAs, forming tRNA-cmnm(5)s(2)U34. The sequence is that of tRNA uridine 5-carboxymethylaminomethyl modification enzyme MnmG from Mycoplasma capricolum subsp. capricolum (strain California kid / ATCC 27343 / NCTC 10154).